The chain runs to 206 residues: Small ribosomal subunit protein uS4 (206 aa).

One can recognise an S4 RNA-binding domain in the interval 96–157 (SRLDNVVYRM…KAKNQARIQN (62 aa)).

Belongs to the universal ribosomal protein uS4 family. Part of the 30S ribosomal subunit. Contacts protein S5. The interaction surface between S4 and S5 is involved in control of translational fidelity.

In terms of biological role, one of the primary rRNA binding proteins, it binds directly to 16S rRNA where it nucleates assembly of the body of the 30S subunit. Its function is as follows. With S5 and S12 plays an important role in translational accuracy. The polypeptide is Small ribosomal subunit protein uS4 (Chromohalobacter salexigens (strain ATCC BAA-138 / DSM 3043 / CIP 106854 / NCIMB 13768 / 1H11)).